A 1755-amino-acid polypeptide reads, in one-letter code: E3 ubiquitin-protein ligase UBR2 (1755 aa).

Alanine 2 is modified (N-acetylalanine). Lysine 94 is covalently cross-linked (Glycyl lysine isopeptide (Lys-Gly) (interchain with G-Cter in ubiquitin)). The segment at 97-168 (HLCGRVFKVG…EGPYCQKHEL (72 aa)) adopts a UBR-type zinc-finger fold. Zn(2+) contacts are provided by cysteine 99, cysteine 112, cysteine 115, cysteine 124, cysteine 127, histidine 133, and histidine 136. An a peptide-binding site is contributed by phenylalanine 148. Zn(2+) is bound at residue cysteine 149. Aspartate 150 contributes to the a peptide binding site. Cysteine 151 contacts Zn(2+). Residue aspartate 153 participates in a peptide binding. Lysine 158 is covalently cross-linked (Glycyl lysine isopeptide (Lys-Gly) (interchain with G-Cter in ubiquitin)). Cysteine 163 lines the Zn(2+) pocket. Lysine 165 participates in a covalent cross-link: Glycyl lysine isopeptide (Lys-Gly) (interchain with G-Cter in ubiquitin). Histidine 166 contributes to the Zn(2+) binding site. Glycyl lysine isopeptide (Lys-Gly) (interchain with G-Cter in ubiquitin) cross-links involve residues lysine 248, lysine 255, and lysine 470. Serine 476 bears the Phosphoserine mark. Glycyl lysine isopeptide (Lys-Gly) (interchain with G-Cter in ubiquitin) cross-links involve residues lysine 488, lysine 568, lysine 779, and lysine 789. Residues 1004–1034 (ESSPTSPVAETEGTIMEESSRDKDKAERKRK) form a disordered region. Residues 1019-1054 (MEESSRDKDKAERKRKAEIARLRREKIMAQMSEMQR) are a coiled coil. Basic and acidic residues predominate over residues 1021–1034 (ESSRDKDKAERKRK). Residues cysteine 1108, cysteine 1111, cysteine 1168, histidine 1170, histidine 1173, cysteine 1176, cysteine 1210, and cysteine 1213 each contribute to the Zn(2+) site. The RING-type; atypical zinc finger occupies 1108–1214 (CILCQEEQEV…NGEFLCPLCE (107 aa)). The interval 1261–1287 (RKEESTPNNASTKNSENVDELQLPEGF) is disordered. Residues 1266–1275 (TPNNASTKNS) are compositionally biased toward polar residues. Residues lysine 1496, lysine 1599, and lysine 1689 each participate in a glycyl lysine isopeptide (Lys-Gly) (interchain with G-Cter in ubiquitin) cross-link. Serine 1694 carries the phosphoserine modification. Tyrosine 1697 carries the post-translational modification Phosphotyrosine.

Belongs to the E3 ubiquitin-protein ligase UBR1-like family. As to quaternary structure, interacts with UBE2B; promotes the UBE2B-H2A interaction and the ubiquitination of histone H2A by UBE2B and UBR2. Interacts with RECQL4. Interacts with TEX19; does not lead to TEX19 degradation and stabilizes it. Interacts with CASP8. Interacts with ATXN3. Interacts with UBE2O. Post-translationally, dephosphorylated by DUSP22 at Ser-1694 and Tyr-1697, leading to subsequent ubiquitination and proteasomal degradation. In terms of processing, 'Lys-48'-linked ubiquitinated at Lys-94, Lys-779 and Lys-1599 following DUSP22-mediated dephosphorylation of Ser-1694 and Tyr-1697 which promotes UBR2 interaction with the SCF(FBW1A) E3 ubiquitin-protein ligase complex. In terms of tissue distribution, broadly expressed, with highest levels in skeletal muscle, kidney and pancreas. Present in acinar cells of the pancreas (at protein level).

It localises to the nucleus. Its subcellular location is the chromosome. It catalyses the reaction S-ubiquitinyl-[E2 ubiquitin-conjugating enzyme]-L-cysteine + [acceptor protein]-L-lysine = [E2 ubiquitin-conjugating enzyme]-L-cysteine + N(6)-ubiquitinyl-[acceptor protein]-L-lysine.. It functions in the pathway protein modification; protein ubiquitination. Functionally, E3 ubiquitin-protein ligase which is a component of the N-end rule pathway. Recognizes and binds to proteins bearing specific N-terminal residues (N-degrons) that are destabilizing according to the N-end rule, leading to their ubiquitination and subsequent degradation. Recognizes both type-1 and type-2 N-degrons, containing positively charged amino acids (Arg, Lys and His) and bulky and hydrophobic amino acids, respectively. Does not ubiquitinate proteins that are acetylated at the N-terminus. In contrast, it strongly binds methylated N-degrons. Plays a critical role in chromatin inactivation and chromosome-wide transcriptional silencing during meiosis via ubiquitination of histone H2A. Binds leucine and is a negative regulator of the leucine-mTOR signaling pathway, thereby controlling cell growth. Required for spermatogenesis, promotes, with Tex19.1, SPO11-dependent recombination foci to accumulate and drive robust homologous chromosome synapsis. Polyubiquitinates LINE-1 retrotransposon encoded, LIRE1, which induces degradation, inhibiting LINE-1 retrotransposon mobilization. Catalyzes ubiquitination and degradation of the N-terminal part of NLRP1 following NLRP1 activation by pathogens and other damage-associated signals: ubiquitination promotes degradation of the N-terminal part and subsequent release of the cleaved C-terminal part of NLRP1, which polymerizes and forms the NLRP1 inflammasome followed by host cell pyroptosis. Plays a role in T-cell receptor signaling by inducing 'Lys-63'-linked ubiquitination of lymphocyte cell-specific kinase LCK. This activity is regulated by DUSP22, which induces 'Lys-48'-linked ubiquitination of UBR2, leading to its proteasomal degradation by SCF E3 ubiquitin-protein ligase complex. The chain is E3 ubiquitin-protein ligase UBR2 (UBR2) from Homo sapiens (Human).